Consider the following 425-residue polypeptide: Protein CLP1 homolog (425 aa).

Residues E18, K59, and 121–126 (DVGKST) contribute to the ATP site.

The protein belongs to the Clp1 family. Clp1 subfamily.

The protein localises to the nucleus. In terms of biological role, required for endonucleolytic cleavage during polyadenylation-dependent pre-mRNA 3'-end formation. The protein is Protein CLP1 homolog (cbc) of Drosophila persimilis (Fruit fly).